The chain runs to 311 residues: MSNSIVIQTNSTVIEDMKQQYKHSLSPKTPQGGIFMAKVPSCTITAYKSGKVMFQGGRAEAEAARWQTVSQTPKTAVKKSVDSHRFAPPASIGTMSIVGSDEVGTGDFFGPMTVVAVYVDAKQIPLLKELGVKDSKNLNDEQITAIAKQLLHVVPYSSLVLHNEKYNELFDKGNNQGKLKALLHNKAITNLLAKMAPTKPEGVLIDQFTQPDTYYKYLAKQKQVQRENVYFATKGESVHLAVAAASILARYSFVKQFNELSKKAGMPLPKGAGKQVDIAAAKLIQKLGKERLPEFVKLHFANTEKAFRLLK.

The 217-residue stretch at 95–311 folds into the RNase H type-2 domain; that stretch reads MSIVGSDEVG…NTEKAFRLLK (217 aa). Asp101, Glu102, and Asp206 together coordinate a divalent metal cation.

It belongs to the RNase HII family. RnhC subfamily. It depends on Mn(2+) as a cofactor. The cofactor is Mg(2+).

The protein localises to the cytoplasm. The catalysed reaction is Endonucleolytic cleavage to 5'-phosphomonoester.. Functionally, endonuclease that specifically degrades the RNA of RNA-DNA hybrids. This chain is Ribonuclease HIII, found in Bacillus cereus (strain 03BB102).